The following is a 631-amino-acid chain: MPTTHDWINNPLGVVDGLFAQSNSSPDWEKKVVEYFKEKLKLNDAHTWVPSLNDVPLHYLKPNSLVKFRCMVQDMFDPEFFMGVYEMNDPTSNSKQVKCGKYKDVTECGQVDFNSRNTVTSERQTFYCVPIPGESNWVKESYAGTSQARVVPSTSYVPNRHKRSYEEDDEMDTQCQQTKDISQGAQSSSESHGNTEPKRQETEAPSQDSSSSHCTSSLDLNFPLPGEKGPACLVKVYEDWDSFKLNDMLEVFGILSVDPALSVIADEREASSLLDPTEGMETMEEQRVHSPPASLVPRLHMLYAQPLAHNNPLLPSSPLENNADYLSCVLGELASVRAELLTFFTHILMGDSLAAEFLILHLISNVYSRRDVLPLGKFTLNLSGCPLSSPFTEHLFKVIQQLVPSSYRLSMSLHNMNTQRMVPRKDYTANRLVSGTLQLAKNTSLFLDETQLEQGQLDSTGVRNITALGNLISWQKVDYDFNYHQMEFPCNINVLIASEGRSLLPSDCQVHLRASLNPPNLEEYLSAVQVAQVPSQLNKYRVYLSVARALNYTISDEITKAVEEDFVDMRKDDPQSMSAEDLHRLLVVARLLSLSHGQNTLSRDGWMKAKQLEALRISRTQQQKCVNGNEP.

Polar residues-rich tracts occupy residues 148 to 157 (ARVVPSTSYV) and 173 to 192 (TQCQ…SESH). Positions 148-218 (ARVVPSTSYV…SSSSHCTSSL (71 aa)) are disordered. Over residues 193–202 (GNTEPKRQET) the composition is skewed to basic and acidic residues. Low complexity predominate over residues 206 to 217 (SQDSSSSHCTSS).

It belongs to the MCMBP family. As to quaternary structure, interacts with the mcm complex: associates with the mcm3-7 complex which lacks mcm2, while it does not interact with the mcm complex when mcm2 is present (mcm2-7 complex).

It is found in the nucleus. Functionally, associated component of the mcm complex that acts as a regulator of DNA replication. Binds to the MCM complex during late S phase and promotes the disassembly of the mcm complex from chromatin, thereby acting as a key regulator of pre-replication complex (pre-RC) unloading from replicated DNA. Can dissociate the mcm complex without addition of ATP; probably acts by destabilizing interactions of each individual subunits of the mcm complex. Required for sister chromatid cohesion. This is Mini-chromosome maintenance complex-binding protein (mcmbp) from Danio rerio (Zebrafish).